We begin with the raw amino-acid sequence, 144 residues long: 3-hydroxyacyl-[acyl-carrier-protein] dehydratase FabZ (144 aa).

Residue H47 is part of the active site.

Belongs to the thioester dehydratase family. FabZ subfamily.

It localises to the cytoplasm. The catalysed reaction is a (3R)-hydroxyacyl-[ACP] = a (2E)-enoyl-[ACP] + H2O. Involved in unsaturated fatty acids biosynthesis. Catalyzes the dehydration of short chain beta-hydroxyacyl-ACPs and long chain saturated and unsaturated beta-hydroxyacyl-ACPs. This is 3-hydroxyacyl-[acyl-carrier-protein] dehydratase FabZ from Nitrosomonas eutropha (strain DSM 101675 / C91 / Nm57).